A 330-amino-acid chain; its full sequence is MAVVYYDQDADLNVLKGKKIAVMGYGSQGHSQAQNLKDSGLDVVVGLRPESKSRAAAQAAGLEVKTVAEAAAEADIIQILLPDETQARVYREEIAPYLTGGKVLMFSHGFNIHFNQIVPPADVDVIMVAPKGPGHLVRRTYVEGQGVPALIAIYQDASGKAKEIGLAYAKGIGATRAGVIETTFKEETETDLFGEQAVLCGGTTALVKAGFETLVEAGYQPEIAYFECLHELKLIVDLMYEGGIKYMRYSISDTAEYGDVTRGPRLIDDHVKSTMKSILKEIQDGVFAREWILENQAGRPSFNAFRKKEREHLIEQVGDQLREMMSWLKK.

Residues 1–182 (MAVVYYDQDA…GATRAGVIET (182 aa)) form the KARI N-terminal Rossmann domain. NADP(+) contacts are provided by residues 25–28 (YGSQ), Arg-48, Ser-51, Ser-53, and 83–86 (DETQ). The active site involves His-108. Gly-134 provides a ligand contact to NADP(+). A KARI C-terminal knotted domain is found at 183 to 328 (TFKEETETDL…DQLREMMSWL (146 aa)). Asp-191, Glu-195, Glu-227, and Glu-231 together coordinate Mg(2+). Substrate is bound at residue Ser-252.

It belongs to the ketol-acid reductoisomerase family. Mg(2+) serves as cofactor.

It carries out the reaction (2R)-2,3-dihydroxy-3-methylbutanoate + NADP(+) = (2S)-2-acetolactate + NADPH + H(+). The catalysed reaction is (2R,3R)-2,3-dihydroxy-3-methylpentanoate + NADP(+) = (S)-2-ethyl-2-hydroxy-3-oxobutanoate + NADPH + H(+). The protein operates within amino-acid biosynthesis; L-isoleucine biosynthesis; L-isoleucine from 2-oxobutanoate: step 2/4. It functions in the pathway amino-acid biosynthesis; L-valine biosynthesis; L-valine from pyruvate: step 2/4. Functionally, involved in the biosynthesis of branched-chain amino acids (BCAA). Catalyzes an alkyl-migration followed by a ketol-acid reduction of (S)-2-acetolactate (S2AL) to yield (R)-2,3-dihydroxy-isovalerate. In the isomerase reaction, S2AL is rearranged via a Mg-dependent methyl migration to produce 3-hydroxy-3-methyl-2-ketobutyrate (HMKB). In the reductase reaction, this 2-ketoacid undergoes a metal-dependent reduction by NADPH to yield (R)-2,3-dihydroxy-isovalerate. The sequence is that of Ketol-acid reductoisomerase (NADP(+)) from Moorella thermoacetica (strain ATCC 39073 / JCM 9320).